A 253-amino-acid polypeptide reads, in one-letter code: HTH-type transcriptional repressor DasR (253 aa).

In terms of domain architecture, HTH gntR-type spans 16 to 86; that stretch reads RAQRVPKYYR…QGKGTFVAKP (71 aa). The segment at residues 46–65 is a DNA-binding region (H-T-H motif); the sequence is ERTLAAEFDTSRTTVPQALQ.

The protein localises to the cytoplasm. Global regulator that is part of the nutrient-sensing system. In the absence of glucosamine 6-P (GlcN6P), represses the phosphotransferase system (PTS) specific for the uptake of N-acetylglucosamine (PTSNag), and genes involved in the metabolism of chitin, as well as several genes involved in development, thereby linking carbon availability to morphogenesis. Regulates the dasABC transport operon involved in glucose-related morphogenesis. Essential for development. In Streptomyces griseus, this protein is HTH-type transcriptional repressor DasR (dasR).